Reading from the N-terminus, the 354-residue chain is UDP-N-acetylglucosamine--N-acetylmuramyl-(pentapeptide) pyrophosphoryl-undecaprenol N-acetylglucosamine transferase (354 aa).

UDP-N-acetyl-alpha-D-glucosamine contacts are provided by residues S13 to G15, N125, S189, I242, A261 to E266, and Q286.

Belongs to the glycosyltransferase 28 family. MurG subfamily.

Its subcellular location is the cell inner membrane. It catalyses the reaction di-trans,octa-cis-undecaprenyl diphospho-N-acetyl-alpha-D-muramoyl-L-alanyl-D-glutamyl-meso-2,6-diaminopimeloyl-D-alanyl-D-alanine + UDP-N-acetyl-alpha-D-glucosamine = di-trans,octa-cis-undecaprenyl diphospho-[N-acetyl-alpha-D-glucosaminyl-(1-&gt;4)]-N-acetyl-alpha-D-muramoyl-L-alanyl-D-glutamyl-meso-2,6-diaminopimeloyl-D-alanyl-D-alanine + UDP + H(+). It participates in cell wall biogenesis; peptidoglycan biosynthesis. Cell wall formation. Catalyzes the transfer of a GlcNAc subunit on undecaprenyl-pyrophosphoryl-MurNAc-pentapeptide (lipid intermediate I) to form undecaprenyl-pyrophosphoryl-MurNAc-(pentapeptide)GlcNAc (lipid intermediate II). This is UDP-N-acetylglucosamine--N-acetylmuramyl-(pentapeptide) pyrophosphoryl-undecaprenol N-acetylglucosamine transferase from Buchnera aphidicola subsp. Acyrthosiphon pisum (strain APS) (Acyrthosiphon pisum symbiotic bacterium).